Here is a 477-residue protein sequence, read N- to C-terminus: Proton extrusion protein PxcA (477 aa).

3 consecutive transmembrane segments (helical) span residues 239 to 259, 354 to 374, and 437 to 457; these read FILL…ITFV, GIKN…IIST, and FNFL…KYWI.

It belongs to the CemA family.

The protein resides in the cell inner membrane. Required for H(+) efflux immediately after light irradiation to form a rapid H(+) concentration gradient across the thylakoid membranes. Together with PxcL, contributes to transient H(+) uptake following dark to light transition. This chain is Proton extrusion protein PxcA, found in Trichodesmium erythraeum (strain IMS101).